The sequence spans 328 residues: Malate dehydrogenase (328 aa).

G12–G18 is an NAD(+) binding site. Residues R92 and R98 each coordinate substrate. Residues N105, Q112, and T129 to N131 contribute to the NAD(+) site. Residues N131 and R162 each coordinate substrate. The active-site Proton acceptor is H187.

Belongs to the LDH/MDH superfamily. MDH type 2 family.

It carries out the reaction (S)-malate + NAD(+) = oxaloacetate + NADH + H(+). Functionally, catalyzes the reversible oxidation of malate to oxaloacetate. The sequence is that of Malate dehydrogenase from Nocardioides sp. (strain ATCC BAA-499 / JS614).